The following is a 197-amino-acid chain: Protein-S-isoprenylcysteine O-methyltransferase A (197 aa).

Helical transmembrane passes span 16–36 (MLLS…TIHG), 52–72 (ALAM…FPGL), and 81–101 (FGLI…ITAG). S-adenosyl-L-methionine contacts are provided by residues 116 to 119 (HGLV), Tyr-124, and 129 to 132 (HPSY). A helical transmembrane segment spans residues 140-160 (VGTQVMLCNPVSAVAFAVVVW). Position 166 (Arg-166) interacts with substrate. S-adenosyl-L-methionine is bound at residue Glu-170.

It belongs to the class VI-like SAM-binding methyltransferase superfamily. Isoprenylcysteine carboxyl methyltransferase family. Zn(2+) serves as cofactor. In terms of tissue distribution, expressed primarily in flowers, stems, leaves and roots. Almost not expressed in siliques. Detected in root tips and vascular tissues of roots, cotyledons, petiols, hypocotyls, filaments, pollen grains and the distal and proximal portions of the gynoecium.

It is found in the endoplasmic reticulum membrane. The enzyme catalyses [protein]-C-terminal S-[(2E,6E)-farnesyl]-L-cysteine + S-adenosyl-L-methionine = [protein]-C-terminal S-[(2E,6E)-farnesyl]-L-cysteine methyl ester + S-adenosyl-L-homocysteine. With respect to regulation, inhibited by farnesylthioacetic acid (FTAA) and N-acetyl-S-trans, trans-farnesyl-l-cysteine (AFC). Functionally, catalyzes the post-translational methylation of isoprenylated C-terminal cysteine residues, resulting in the modulation of the function of prenylated proteins. Involved in negative regulation of abscisic acid signaling. Carboxyl methylation is a reversible and potentially regulated step in the post-translational modification of prenylated proteins. This is Protein-S-isoprenylcysteine O-methyltransferase A from Arabidopsis thaliana (Mouse-ear cress).